The sequence spans 278 residues: MTTRLDTRFADLKKEGRAALVTFLMCGDPDLETSLAIMKALPKAGADVIEIGMPFTDPMADGPAIQAAGLRALKAGTTLKKTLDVVRNFRKGEAATPVVLMGYYNPIFIYGVDRFLVDAKEAGVDGLIVVDLPPEEDEELCLPALKAGVNFIRLATPTTDDKRLPAVLANTSGFVYYVSITGITGAAAADDKQVGEAVARIKRHTQLPVCVGFGIRTPEAAARIARHCEGAVVGSALVDALRGTLDAEGKAGPNTVSAVTDLVAALAQGVHGVKPVSA.

Catalysis depends on proton acceptor residues glutamate 50 and aspartate 61.

The protein belongs to the TrpA family. In terms of assembly, tetramer of two alpha and two beta chains.

The enzyme catalyses (1S,2R)-1-C-(indol-3-yl)glycerol 3-phosphate + L-serine = D-glyceraldehyde 3-phosphate + L-tryptophan + H2O. Its pathway is amino-acid biosynthesis; L-tryptophan biosynthesis; L-tryptophan from chorismate: step 5/5. In terms of biological role, the alpha subunit is responsible for the aldol cleavage of indoleglycerol phosphate to indole and glyceraldehyde 3-phosphate. This is Tryptophan synthase alpha chain from Afipia carboxidovorans (strain ATCC 49405 / DSM 1227 / KCTC 32145 / OM5) (Oligotropha carboxidovorans).